The primary structure comprises 540 residues: Mitochondrial antiviral-signaling protein (540 aa).

N-acetylproline is present on P2. The Cytoplasmic portion of the chain corresponds to 2 to 513 (PFAEDKTYKY…REVPCHRPSP (512 aa)). Residues K7 and K10 each participate in a glycyl lysine isopeptide (Lys-Gly) (interchain with G-Cter in ubiquitin) cross-link. A CARD domain is found at 10-77 (KYICRNFSNF…WVEYFIAALR (68 aa)). A required for interaction with NLRX1 region spans residues 10-77 (KYICRNFSNF…WVEYFIAALR (68 aa)). C79 carries S-palmitoyl cysteine lipidation. The disordered stretch occupies residues 95–297 (YQPRTSDRPP…EAPANSLPSK (203 aa)). Residues 106-122 (PLEPPSLPAERPGPPTP) show a composition bias toward pro residues. The tract at residues 143–147 (PVQET) is interaction with TRAF2. Polar residues-rich tracts occupy residues 145-165 (QETQ…QTLS) and 179-216 (ESSS…SLTP). Phosphoserine is present on residues S152, S157, S165, S180, and S188. The interaction with TRAF6 stretch occupies residues 153-158 (PGENSE). T215 is subject to Phosphothreonine. Phosphoserine occurs at positions 222 and 233. T234 carries the phosphothreonine modification. R236 carries the post-translational modification Asymmetric dimethylarginine. Residues 241 to 266 (PGPTGSVVSTGTSFSSSSPGLASAGA) show a composition bias toward low complexity. 2 positions are modified to phosphoserine: S253 and S258. Residues K311 and K325 each participate in a glycyl lysine isopeptide (Lys-Gly) (interchain with G-Cter in ubiquitin) cross-link. Disordered stretches follow at residues 314 to 358 (ANPA…RAGM) and 373 to 419 (SAST…SELS). 3 stretches are compositionally biased toward polar residues: residues 317–331 (ASVS…TSSK), 339–355 (NALT…NSTR), and 373–382 (SASTVPTDGS). Positions 388–403 (TPAAPTPAGATGGSSA) are enriched in low complexity. Residue S408 is modified to Phosphoserine. The pLxIS motif motif lies at 439–442 (LAIS). S442 carries the post-translational modification Phosphoserine; by TBK1. The segment at 455–460 (PEENEY) is interaction with TRAF6. Glycyl lysine isopeptide (Lys-Gly) (interchain with G-Cter in ubiquitin) cross-links involve residues K461 and K500. Residue K461 forms a (Microbial infection) Glycyl lysine isopeptide (Lys-Gly) (interchain with G-Cter in UFM1) linkage. The disordered stretch occupies residues 476–507 (IQLLEGNPGPPADPDGGPRPQADRKFQEREVP). Over residues 496 to 507 (QADRKFQEREVP) the composition is skewed to basic and acidic residues. A helical transmembrane segment spans residues 514 to 534 (GALWLQVAVTGVLVVTLLVVL). Over 535 to 540 (YRRRLH) the chain is Mitochondrial intermembrane.

Self-associates and polymerizes (via CARD domains) to form 400 nM long three-stranded helical filaments on mitochondria, filament nucleation requires interaction with RIGI whose CARD domains act as a template for filament assembly. Interacts with RIGI, IFIH1/MDA5, TRAF2, TRAF6 and C1QBP. May interact with FADD, RIPK1, CHUK and IKBKB. Interacts (when phosphorylated) with IRF3; following activation and phosphorylation on the pLxIS motif by TBK1, recruits IRF3. Interacts with NLRX1. Interaction with NLRX1 requires the CARD domain. Interacts with PSMA7. Interacts with TRAFD1. Interacts (via C-terminus) with PCBP2 in a complex containing MAVS/IPS1, PCBP2 and ITCH. Interacts with CYLD. Interacts with SRC. Interacts with DHX58/LGP2 and IKBKE. Interacts with STING1. Interacts with IFIT3 (via N-terminus). Interacts with TBK1 only in the presence of IFIT3. Interacts with TTLL12; the interaction prevents MAVS binding to TBK1 and IKBKE. Interacts with MUL1. Interacts with ANKRD17. Interacts with NDFIP1. Interacts with SMURF1; the interaction is mediated by NDFIP1 and leads to MAVS ubiquitination and degradation. Interacts with UBXN1; this interaction inhibits MAVS-mediated antiviral pathway. Interacts (via C-terminus) with GPATCH3; the interaction is markedly increased upon viral infection. Directly interacts (via CARD domain) with ATG5 and ATG12, either as ATG5 and ATG12 monomers or as ATG12-ATG5 conjugates. Interacts with DHX33 (via the helicase C-terminal domain). Interacts with DDX3X (via C-terminus); this interaction occurs rapidly, but transiently after Sendai virus infection. The interaction with DDX3X potentiates MAVS-mediated IFNB induction. Conversely inhibition of this interaction, for instance by HCV core protein, prevents MAVS-mediated IFNB induction. Transiently interacts with TRAF3 early during Sendai virus infection. Interacts with CLPB; the interaction is enhanced by Sendai virus infection. Interacts with TRAF3IP3. Interacts with TOMM70; the interaction is enhanced by Sendai virus infection. Interacts with ZNFX1. Interacts with N4BP3; this interaction promotes the polyubiquitination of MAVS. Interacts with TAX1BP1; this interaction induces MAVS polyubiquitination. Interacts with NLRP3; promoting NLRP3 recruitment to mitochondria and activation of the NLRP3 inflammasome. Interacts with ECSIT; this interaction bridges RIGI to the MAVS complex at the mitochondrion. Interacts with UBL7; this interaction promotes MAVS 'Lys-27'-linked ubiquitination leading to type I interferon production. Interacts (via transmembrane domain) with SMIM30/MAVI1 (via transmembrane domain); the interaction disrupts MAVS interaction with RIGI and inhibits MAVS aggregation, resulting in the repression of type I interferon signaling and innate immune responses. As to quaternary structure, (Microbial infection) Interacts with hepatitis C virus (HCV) NS3/4A protease; this interaction leads to MAVS cleavage, thereby preventing the establishment of an antiviral state. In terms of assembly, (Microbial infection) Interacts with hepatitis GB virus B NS3/4A protease; this interaction leads to MAVS cleavage. (Microbial infection) Interacts with human respiratory syncytial virus/HRSV protein NS1; this interaction disrupts MAVS binding to RIGI. As to quaternary structure, (Microbial infection) Interacts with Andes virus Nnon-structural protein NS-S; this interaction may reduce MAVS ubiquitination and leads to inhibition of MAVS-induced type-I IFN signaling pathway. In terms of assembly, (Microbial infection) Interacts with Seneca Valley virus protease 3C; this interaction allows the cleavage of MAVS and subsequent suppression of host innate immunity. (Microbial infection) Interacts with SARS-CoV virus protein ORF9b; this interaction mediates MAVS proteasomal degradation. As to quaternary structure, (Microbial infection) Interacts with SARS-CoV-2 virus protein M; this interaction impairs MAVS self-association and its recruitment of downstream components. In terms of assembly, (Microbial infection) Interacts with foot-and-mouth disease virus protein VP1; this interaction competes with TRAF3 interaction to MAVS leading to suppression of host innate immunity. (Microbial infection) Interacts with Epstein-Barr virus protein BILF1; this interaction mediates MAVS routing from mitochondria to lysosomes. In terms of processing, following activation, phosphorylated by TBK1 at Ser-442 in the pLxIS motif. The phosphorylated pLxIS motif constitutes an IRF3-binding motif, leading to recruitment of the transcription factor IRF3 to induce type-I interferons and other cytokines. Post-translationally, ubiquitinated. Undergoes 'Lys-48'-linked polyubiquitination catalyzed by ITCH; ITCH-dependent polyubiquitination is mediated by the interaction with PCBP2 and leads to MAVS/IPS1 proteasomal degradation. Ubiquitinated by RNF125, leading to its degradation by the proteasome. Undergoes 'Lys-48'-linked ubiquitination catalyzed by SMURF1. Undergoes 'Lys-48'-linked ubiquitination catalyzed by MARCHF5 at Lys-7 and Lys-500, leading to proteasomal degradation. Ubiquitinated via 'Lys-63'-linked ubiquitination at Lys-10, Lys-311 and Lys-461 by UBE2N and TRIM31, promoting MAVS polymerization and formation of three-stranded helical filaments on mitochondria. Undergoes 'Lys-63'-linked ubiquitination leading to enhanced interaction between MAVS and TRAF2. Undergoes 'Lys-27'-linked ubiquitination by TRIM21 leading to enhanced interaction between MAVS and TBK1. Deubiquitinated by USP10 leading to attenuation of RIGI-mediated MAVS aggregation and production of type I interferon. Undergoes 'Lys-48'-linked polyubiquitination catalyzed by RNF115 leading to its degradation. Palmitoylated by ZHDDC4. Palmitoylation promotes MAVS stabilization and activation by inhibiting 'Lys-48'- but facilitating 'Lys-63'-linked ubiquitination. In terms of processing, proteolytically cleaved by apoptotic caspases during apoptosis, leading to its inactivation. Cleavage by CASP3 during virus-induced apoptosis inactivates it, preventing cytokine overproduction. Post-translationally, (Microbial infection) Cleaved and degraded by hepatitis A virus (HAV) protein 3ABC allowing the virus to disrupt the activation of host IRF3 through the MDA5 pathway. (Microbial infection) Cleaved by the protease 2A of coxsackievirus B3, poliovirus and enterovirus 71 allowing the virus to disrupt the host type I interferon production. In terms of processing, (Microbial infection) Cleaved by Seneca Valley virus protease 3C allowing the virus to suppress interferon type-I production. Post-translationally, (Microbial infection) Cleaved by HCV protease NS3/4A, thereby preventing the establishment of an antiviral state. (Microbial infection) UFMylated by ULF1 in association with Epstein-Barr virus BILF1; leading to MAVS routing to the lysosome. Present in T-cells, monocytes, epithelial cells and hepatocytes (at protein level). Ubiquitously expressed, with highest levels in heart, skeletal muscle, liver, placenta and peripheral blood leukocytes.

It localises to the mitochondrion outer membrane. The protein localises to the mitochondrion. It is found in the peroxisome. In terms of biological role, adapter required for innate immune defense against viruses. Acts downstream of DHX33, RIGI and IFIH1/MDA5, which detect intracellular dsRNA produced during viral replication, to coordinate pathways leading to the activation of NF-kappa-B, IRF3 and IRF7, and to the subsequent induction of antiviral cytokines such as IFNB and RANTES (CCL5). Peroxisomal and mitochondrial MAVS act sequentially to create an antiviral cellular state. Upon viral infection, peroxisomal MAVS induces the rapid interferon-independent expression of defense factors that provide short-term protection, whereas mitochondrial MAVS activates an interferon-dependent signaling pathway with delayed kinetics, which amplifies and stabilizes the antiviral response. May activate the same pathways following detection of extracellular dsRNA by TLR3. May protect cells from apoptosis. Involved in NLRP3 inflammasome activation by mediating NLRP3 recruitment to mitochondria. In Homo sapiens (Human), this protein is Mitochondrial antiviral-signaling protein.